The sequence spans 252 residues: dITP/XTP pyrophosphatase (252 aa).

7 to 12 (THNEGK) lines the substrate pocket. The active-site Proton acceptor is D74. A Mg(2+)-binding site is contributed by D74. Residues S75 and 193 to 196 (FGYD) each bind substrate. The segment at 202-229 (DDQPAGRVSTEPDHEGEPLTSAEMTPAE) is disordered. Substrate-binding positions include K230 and 235–236 (HR).

This sequence belongs to the HAM1 NTPase family. Homodimer. It depends on Mg(2+) as a cofactor.

It catalyses the reaction XTP + H2O = XMP + diphosphate + H(+). It carries out the reaction dITP + H2O = dIMP + diphosphate + H(+). The enzyme catalyses ITP + H2O = IMP + diphosphate + H(+). Functionally, pyrophosphatase that catalyzes the hydrolysis of nucleoside triphosphates to their monophosphate derivatives, with a high preference for the non-canonical purine nucleotides XTP (xanthosine triphosphate), dITP (deoxyinosine triphosphate) and ITP. Seems to function as a house-cleaning enzyme that removes non-canonical purine nucleotides from the nucleotide pool, thus preventing their incorporation into DNA/RNA and avoiding chromosomal lesions. The chain is dITP/XTP pyrophosphatase from Bifidobacterium longum (strain NCC 2705).